The following is a 90-amino-acid chain: Antitoxin VapB35 (90 aa).

Residues 53–90 (GSVQPARVHGPAPRPTIPMRGGLDSGTLLERMRAEERY) form a disordered region.

It belongs to the phD/YefM antitoxin family.

Functionally, antitoxin component of a type II toxin-antitoxin (TA) system. Neutralizes the effect of cognate toxin VapC35. This Mycobacterium tuberculosis (strain CDC 1551 / Oshkosh) protein is Antitoxin VapB35 (vapB35).